The chain runs to 522 residues: Glutamate--cysteine ligase (522 aa).

The protein belongs to the glutamate--cysteine ligase type 1 family. Type 1 subfamily.

The catalysed reaction is L-cysteine + L-glutamate + ATP = gamma-L-glutamyl-L-cysteine + ADP + phosphate + H(+). Its pathway is sulfur metabolism; glutathione biosynthesis; glutathione from L-cysteine and L-glutamate: step 1/2. This chain is Glutamate--cysteine ligase, found in Vibrio parahaemolyticus serotype O3:K6 (strain RIMD 2210633).